A 103-amino-acid chain; its full sequence is Small ribosomal subunit protein uS10 (103 aa).

This sequence belongs to the universal ribosomal protein uS10 family. As to quaternary structure, part of the 30S ribosomal subunit.

Involved in the binding of tRNA to the ribosomes. This chain is Small ribosomal subunit protein uS10, found in Desulfatibacillum aliphaticivorans.